We begin with the raw amino-acid sequence, 243 residues long: uncharacterized protein (243 aa).

Belongs to the ycf23 family.

It is found in the plastid. The protein localises to the cyanelle. This is an uncharacterized protein from Cyanophora paradoxa.